The chain runs to 157 residues: Transcription elongation factor GreA (157 aa).

Positions 1 to 75 (MSKEIILTQE…VETLINRAKV (75 aa)) form a coiled coil.

Belongs to the GreA/GreB family.

Functionally, necessary for efficient RNA polymerase transcription elongation past template-encoded arresting sites. The arresting sites in DNA have the property of trapping a certain fraction of elongating RNA polymerases that pass through, resulting in locked ternary complexes. Cleavage of the nascent transcript by cleavage factors such as GreA or GreB allows the resumption of elongation from the new 3'terminus. GreA releases sequences of 2 to 3 nucleotides. This is Transcription elongation factor GreA from Mycoplasma capricolum subsp. capricolum (strain California kid / ATCC 27343 / NCTC 10154).